The sequence spans 102 residues: Small ribosomal subunit protein uS10 (102 aa).

It belongs to the universal ribosomal protein uS10 family. Part of the 30S ribosomal subunit.

Its function is as follows. Involved in the binding of tRNA to the ribosomes. The polypeptide is Small ribosomal subunit protein uS10 (Mesoplasma florum (strain ATCC 33453 / NBRC 100688 / NCTC 11704 / L1) (Acholeplasma florum)).